Consider the following 618-residue polypeptide: DNA mismatch repair protein MutL (618 aa).

Low complexity predominate over residues 367–378; the sequence is EPTAAREPATPR. Residues 367–402 are disordered; sequence EPTAAREPATPRYSGGASGGNGGRQTAGGWPHAQPG. Residues 382–392 show a composition bias toward gly residues; sequence GASGGNGGRQT.

This sequence belongs to the DNA mismatch repair MutL/HexB family.

Functionally, this protein is involved in the repair of mismatches in DNA. It is required for dam-dependent methyl-directed DNA mismatch repair. May act as a 'molecular matchmaker', a protein that promotes the formation of a stable complex between two or more DNA-binding proteins in an ATP-dependent manner without itself being part of a final effector complex. The protein is DNA mismatch repair protein MutL of Salmonella choleraesuis (strain SC-B67).